Reading from the N-terminus, the 787-residue chain is DNA ligase (787 aa).

Residues 32 to 36, 81 to 82, and glutamate 121 each bind NAD(+); these read DAEYD and SL. Lysine 123 functions as the N6-AMP-lysine intermediate in the catalytic mechanism. NAD(+) is bound by residues arginine 144, glutamate 181, lysine 297, and lysine 321. 4 residues coordinate Zn(2+): cysteine 415, cysteine 418, cysteine 445, and cysteine 451. The BRCT domain occupies 703-787; the sequence is VEGLPLAGQT…RLTELGVAVD (85 aa).

This sequence belongs to the NAD-dependent DNA ligase family. LigA subfamily. Mg(2+) serves as cofactor. Requires Mn(2+) as cofactor.

It catalyses the reaction NAD(+) + (deoxyribonucleotide)n-3'-hydroxyl + 5'-phospho-(deoxyribonucleotide)m = (deoxyribonucleotide)n+m + AMP + beta-nicotinamide D-nucleotide.. DNA ligase that catalyzes the formation of phosphodiester linkages between 5'-phosphoryl and 3'-hydroxyl groups in double-stranded DNA using NAD as a coenzyme and as the energy source for the reaction. It is essential for DNA replication and repair of damaged DNA. This Pseudomonas syringae pv. tomato (strain ATCC BAA-871 / DC3000) protein is DNA ligase.